The following is a 401-amino-acid chain: Formate-dependent phosphoribosylglycinamide formyltransferase (401 aa).

N(1)-(5-phospho-beta-D-ribosyl)glycinamide contacts are provided by residues 27–28 and Glu-87; that span reads EL. Residues Arg-119, Lys-160, 165–170, 200–203, and Glu-208 each bind ATP; these read SSGKGQ and EELV. An ATP-grasp domain is found at 124-313; sequence EFAAEEVGVT…QFDLHLRAIL (190 aa). 2 residues coordinate Mg(2+): Glu-272 and Glu-284. N(1)-(5-phospho-beta-D-ribosyl)glycinamide is bound by residues Asp-291, Lys-361, and 368–369; that span reads RR.

The protein belongs to the PurK/PurT family. Homodimer.

The catalysed reaction is N(1)-(5-phospho-beta-D-ribosyl)glycinamide + formate + ATP = N(2)-formyl-N(1)-(5-phospho-beta-D-ribosyl)glycinamide + ADP + phosphate + H(+). It functions in the pathway purine metabolism; IMP biosynthesis via de novo pathway; N(2)-formyl-N(1)-(5-phospho-D-ribosyl)glycinamide from N(1)-(5-phospho-D-ribosyl)glycinamide (formate route): step 1/1. Involved in the de novo purine biosynthesis. Catalyzes the transfer of formate to 5-phospho-ribosyl-glycinamide (GAR), producing 5-phospho-ribosyl-N-formylglycinamide (FGAR). Formate is provided by PurU via hydrolysis of 10-formyl-tetrahydrofolate. This chain is Formate-dependent phosphoribosylglycinamide formyltransferase, found in Haloquadratum walsbyi (strain DSM 16790 / HBSQ001).